We begin with the raw amino-acid sequence, 492 residues long: Bifunctional protein GlmU (492 aa).

The interval 1–238 is pyrophosphorylase; that stretch reads MRDAAVVILA…AALVAGVNDR (238 aa). UDP-N-acetyl-alpha-D-glucosamine-binding positions include 9 to 12, lysine 23, glutamine 80, and 85 to 86; these read LAAG and GT. Aspartate 111 lines the Mg(2+) pocket. Glycine 148, glutamate 163, asparagine 178, and asparagine 236 together coordinate UDP-N-acetyl-alpha-D-glucosamine. Asparagine 236 is a binding site for Mg(2+). The segment at 239–259 is linker; it reads VQLADLAAVLNRRIVEGHQRA. Positions 260–492 are N-acetyltransferase; sequence GVTIIDPAST…EDQGPEATGE (233 aa). The UDP-N-acetyl-alpha-D-glucosamine site is built by arginine 341 and lysine 359. Catalysis depends on histidine 371, which acts as the Proton acceptor. Tyrosine 374 and asparagine 385 together coordinate UDP-N-acetyl-alpha-D-glucosamine. Acetyl-CoA is bound by residues alanine 388, 394–395, serine 413, and alanine 431; that span reads NY. The segment covering 469 to 483 has biased composition (low complexity); the sequence is EAAAAAGAGAGAAAE. Residues 469 to 492 are disordered; the sequence is EAAAAAGAGAGAAAEDQGPEATGE.

This sequence in the N-terminal section; belongs to the N-acetylglucosamine-1-phosphate uridyltransferase family. In the C-terminal section; belongs to the transferase hexapeptide repeat family. Homotrimer. Requires Mg(2+) as cofactor.

The protein localises to the cytoplasm. It carries out the reaction alpha-D-glucosamine 1-phosphate + acetyl-CoA = N-acetyl-alpha-D-glucosamine 1-phosphate + CoA + H(+). It catalyses the reaction N-acetyl-alpha-D-glucosamine 1-phosphate + UTP + H(+) = UDP-N-acetyl-alpha-D-glucosamine + diphosphate. It participates in nucleotide-sugar biosynthesis; UDP-N-acetyl-alpha-D-glucosamine biosynthesis; N-acetyl-alpha-D-glucosamine 1-phosphate from alpha-D-glucosamine 6-phosphate (route II): step 2/2. The protein operates within nucleotide-sugar biosynthesis; UDP-N-acetyl-alpha-D-glucosamine biosynthesis; UDP-N-acetyl-alpha-D-glucosamine from N-acetyl-alpha-D-glucosamine 1-phosphate: step 1/1. Its pathway is bacterial outer membrane biogenesis; LPS lipid A biosynthesis. Catalyzes the last two sequential reactions in the de novo biosynthetic pathway for UDP-N-acetylglucosamine (UDP-GlcNAc). The C-terminal domain catalyzes the transfer of acetyl group from acetyl coenzyme A to glucosamine-1-phosphate (GlcN-1-P) to produce N-acetylglucosamine-1-phosphate (GlcNAc-1-P), which is converted into UDP-GlcNAc by the transfer of uridine 5-monophosphate (from uridine 5-triphosphate), a reaction catalyzed by the N-terminal domain. In Mycolicibacterium vanbaalenii (strain DSM 7251 / JCM 13017 / BCRC 16820 / KCTC 9966 / NRRL B-24157 / PYR-1) (Mycobacterium vanbaalenii), this protein is Bifunctional protein GlmU.